The chain runs to 142 residues: Large-conductance mechanosensitive channel (142 aa).

The next 3 helical transmembrane spans lie at 14–34 (VVDL…VNSL), 38–58 (VIMP…YYIP), and 82–102 (GQFL…FMVI).

This sequence belongs to the MscL family. In terms of assembly, homopentamer.

It localises to the cell inner membrane. Functionally, channel that opens in response to stretch forces in the membrane lipid bilayer. May participate in the regulation of osmotic pressure changes within the cell. In Methylorubrum populi (strain ATCC BAA-705 / NCIMB 13946 / BJ001) (Methylobacterium populi), this protein is Large-conductance mechanosensitive channel.